The sequence spans 122 residues: Cytochrome b-c1 complex subunit 7-1, mitochondrial (122 aa).

It belongs to the UQCRB/QCR7 family. As to quaternary structure, component of the ubiquinol-cytochrome c oxidoreductase (cytochrome b-c1 complex, complex III, CIII), a multisubunit enzyme composed of 10 subunits. The complex is composed of 3 respiratory subunits cytochrome b (MT-CYB), cytochrome c1 (CYC1-1 or CYC1-2) and Rieske protein (UCR1-1 or UCR1-2), 2 core protein subunits MPPalpha1 (or MPPalpha2) and MPPB, and 5 low-molecular weight protein subunits QCR7-1 (or QCR7-2), UCRQ-1 (or UCRQ-2), QCR9, UCRY and probably QCR6-1 (or QCR6-2). The complex exists as an obligatory dimer and forms supercomplexes (SCs) in the inner mitochondrial membrane with NADH-ubiquinone oxidoreductase (complex I, CI), resulting in different assemblies (supercomplexes SCI(1)III(2) and SCI(2)III(4)).

It localises to the mitochondrion inner membrane. In terms of biological role, component of the ubiquinol-cytochrome c oxidoreductase, a multisubunit transmembrane complex that is part of the mitochondrial electron transport chain which drives oxidative phosphorylation. The respiratory chain contains 3 multisubunit complexes succinate dehydrogenase (complex II, CII), ubiquinol-cytochrome c oxidoreductase (cytochrome b-c1 complex, complex III, CIII) and cytochrome c oxidase (complex IV, CIV), that cooperate to transfer electrons derived from NADH and succinate to molecular oxygen, creating an electrochemical gradient over the inner membrane that drives transmembrane transport and the ATP synthase. The cytochrome b-c1 complex catalyzes electron transfer from ubiquinol to cytochrome c, linking this redox reaction to translocation of protons across the mitochondrial inner membrane, with protons being carried across the membrane as hydrogens on the quinol. In the process called Q cycle, 2 protons are consumed from the matrix, 4 protons are released into the intermembrane space and 2 electrons are passed to cytochrome c. The chain is Cytochrome b-c1 complex subunit 7-1, mitochondrial (QCR7-1) from Arabidopsis thaliana (Mouse-ear cress).